Consider the following 141-residue polypeptide: Hemoglobin subunit alpha-1/2 (141 aa).

The 141-residue stretch at 1–141 (VLSPADKTNV…VSTVLTSKYR (141 aa)) folds into the Globin domain. Serine 3 is modified (phosphoserine). Lysine 7 carries the N6-succinyllysine modification. The residue at position 8 (threonine 8) is a Phosphothreonine. Lysine 11 is subject to N6-succinyllysine. Lysine 16 carries the N6-acetyllysine; alternate modification. An N6-succinyllysine; alternate modification is found at lysine 16. Residue tyrosine 24 is modified to Phosphotyrosine. The residue at position 35 (serine 35) is a Phosphoserine. N6-succinyllysine is present on lysine 40. Serine 49 is subject to Phosphoserine. Histidine 58 provides a ligand contact to O2. Residue histidine 87 coordinates heme b. Serine 102 is subject to Phosphoserine. Threonine 108 is modified (phosphothreonine). Residues serine 124 and serine 131 each carry the phosphoserine modification. 2 positions are modified to phosphothreonine: threonine 134 and threonine 137. Serine 138 bears the Phosphoserine mark.

Belongs to the globin family. In terms of assembly, heterotetramer of two alpha chains and two beta chains. In terms of tissue distribution, red blood cells.

Functionally, involved in oxygen transport from the lung to the various peripheral tissues. The protein is Hemoglobin subunit alpha-1/2 of Macaca speciosa (Stump-tail macaque).